A 184-amino-acid chain; its full sequence is MPQTLFFVTSNASKLAEVSAILAASGISVQSMALDLPELQGSIEDISKDKAKRAAEAIGGPVLVEDTCLCFNALKGLPGPYIKWFMKDLGHEGLVNMLAAYEDKSAQAVCTFAHCEGPGKEPVLFQGRTDGKIVPPRGPAKFGWDPIFEYEGQTYAEMDKAAKNLISHRFKALEMLKEWMEAHP.

Residue 9–14 coordinates ITP; the sequence is TSNASK. Glu38 is a binding site for Mg(2+). Residues Lys50, 66–67, Lys83, 142–145, Lys163, and 168–169 contribute to the ITP site; these read DT, FGWD, and HR.

Belongs to the HAM1 NTPase family. Homodimer. Mg(2+) is required as a cofactor. The cofactor is Mn(2+).

It is found in the cytoplasm. Its subcellular location is the nucleus. It carries out the reaction ITP + H2O = IMP + diphosphate + H(+). The enzyme catalyses dITP + H2O = dIMP + diphosphate + H(+). The catalysed reaction is XTP + H2O = XMP + diphosphate + H(+). In terms of biological role, pyrophosphatase that hydrolyzes non-canonical purine nucleotides such as inosine triphosphate (ITP), deoxyinosine triphosphate (dITP) or xanthosine 5'-triphosphate (XTP) to their respective monophosphate derivatives. The enzyme does not distinguish between the deoxy- and ribose forms. Probably excludes non-canonical purines from RNA and DNA precursor pools, thus preventing their incorporation into RNA and DNA and avoiding chromosomal lesions. The sequence is that of Inosine triphosphate pyrophosphatase from Tuber melanosporum (strain Mel28) (Perigord black truffle).